A 575-amino-acid polypeptide reads, in one-letter code: Hemagglutinin-neuraminidase (575 aa).

Basic and acidic residues predominate over residues 1–10; the sequence is MDGDRSKRDS. Positions 1 to 25 are disordered; the sequence is MDGDRSKRDSYWSTSPGGSTTKLVS. Residues 1–37 are Intravirion-facing; the sequence is MDGDRSKRDSYWSTSPGGSTTKLVSDSERSGKVDTWL. The incorporation in virion stretch occupies residues 10–14; that stretch reads SYWST. A compositionally biased stretch (polar residues) spans 11–24; sequence YWSTSPGGSTTKLV. A helical membrane pass occupies residues 38-58; sequence LILAFTQWALSIATVIICIVI. The tract at residues 59 to 140 is involved in interaction with F protein; sequence AARQGYSMER…RQELTQLCDS (82 aa). The Virion surface portion of the chain corresponds to 59-575; it reads AARQGYSMER…SIPKLCKAES (517 aa). The N-linked (GlcNAc...) asparagine; by host glycan is linked to N77. Cystine bridges form between C192–C216, C258–C271, C357–C469, and C463–C473. Residues 254–259 are involved in neuraminidase activity; the sequence is NRKSCS. N-linked (GlcNAc...) asparagine; by host glycans are attached at residues N499 and N511. C535 and C544 are joined by a disulfide.

The protein belongs to the paramyxoviruses hemagglutinin-neuraminidase family. In terms of assembly, homotetramer; composed of disulfide-linked homodimers. Interacts with F protein trimer. N-glycosylated; glycans consist of a mixture of high mannose-type oligosaccharides and of complex-type oligosaccharides.

It is found in the virion membrane. Its subcellular location is the host cell membrane. It carries out the reaction Hydrolysis of alpha-(2-&gt;3)-, alpha-(2-&gt;6)-, alpha-(2-&gt;8)- glycosidic linkages of terminal sialic acid residues in oligosaccharides, glycoproteins, glycolipids, colominic acid and synthetic substrates.. Attaches the virus to sialic acid-containing cell receptors and thereby initiating infection. Binding of HN protein to the receptor induces a conformational change that allows the F protein to trigger virion/cell membranes fusion. Its function is as follows. Neuraminidase activity ensures the efficient spread of the virus by dissociating the mature virions from the neuraminic acid containing glycoproteins. This Cavia cutleri (Guinea pig) protein is Hemagglutinin-neuraminidase (HN).